A 209-amino-acid chain; its full sequence is Uracil phosphoribosyltransferase (209 aa).

Residues R79, R104, and D131–S139 each bind 5-phospho-alpha-D-ribose 1-diphosphate. Residues I194 and G199–A201 contribute to the uracil site. D200 serves as a coordination point for 5-phospho-alpha-D-ribose 1-diphosphate.

The protein belongs to the UPRTase family. Mg(2+) is required as a cofactor.

The catalysed reaction is UMP + diphosphate = 5-phospho-alpha-D-ribose 1-diphosphate + uracil. The protein operates within pyrimidine metabolism; UMP biosynthesis via salvage pathway; UMP from uracil: step 1/1. With respect to regulation, allosterically activated by GTP. Catalyzes the conversion of uracil and 5-phospho-alpha-D-ribose 1-diphosphate (PRPP) to UMP and diphosphate. The chain is Uracil phosphoribosyltransferase from Staphylococcus epidermidis (strain ATCC 35984 / DSM 28319 / BCRC 17069 / CCUG 31568 / BM 3577 / RP62A).